Here is a 460-residue protein sequence, read N- to C-terminus: Alpha-amylase (460 aa).

Residues 1–21 form the signal peptide; sequence MASRTLSGALALAAAATAVLA. Ca(2+) contacts are provided by asparagine 121, glutamine 167, and aspartate 176. Aspartate 206 acts as the Nucleophile in catalysis. Histidine 210 provides a ligand contact to Ca(2+). The active-site Proton donor is the glutamate 233.

Belongs to the glycosyl hydrolase 13 family. Monomer. The cofactor is Ca(2+).

It carries out the reaction Endohydrolysis of (1-&gt;4)-alpha-D-glucosidic linkages in polysaccharides containing three or more (1-&gt;4)-alpha-linked D-glucose units.. This is Alpha-amylase (amy) from Streptomyces thermoviolaceus.